A 116-amino-acid polypeptide reads, in one-letter code: MRVKTGVVRRRRHKKVLKLARGFYSGRRKHFRKAKEQLERSMYYAFRDRKQKKRKFRSLWVVRINAACRMHETSYSRFMHALKVANIELDRKVLADMAMNDMQAFKSVLESVKEHL.

It belongs to the bacterial ribosomal protein bL20 family.

Its function is as follows. Binds directly to 23S ribosomal RNA and is necessary for the in vitro assembly process of the 50S ribosomal subunit. It is not involved in the protein synthesizing functions of that subunit. This chain is Large ribosomal subunit protein bL20, found in Helicobacter pylori (strain P12).